Consider the following 28-residue polypeptide: Trypsin inhibitor A (28 aa).

3 disulfide bridges follow: Cys-3–Cys-20, Cys-10–Cys-22, and Cys-16–Cys-27.

This sequence belongs to the protease inhibitor I7 (squash-type serine protease inhibitor) family.

The protein resides in the secreted. Functionally, inhibits trypsin. In Momordica charantia (Bitter gourd), this protein is Trypsin inhibitor A.